A 382-amino-acid polypeptide reads, in one-letter code: Chaperone protein DnaJ 2 (382 aa).

Positions Asp-4–Gly-68 constitute a J domain. The CR-type zinc finger occupies Gly-132–Arg-214. Positions 145, 148, 162, 165, 188, 191, 202, and 205 each coordinate Zn(2+). CXXCXGXG motif repeat units follow at residues Cys-145–Gly-152, Cys-162–Gly-169, Cys-188–Gly-195, and Cys-202–Gly-209.

This sequence belongs to the DnaJ family. In terms of assembly, homodimer. Interacts with RNase J. The cofactor is Zn(2+).

It is found in the cytoplasm. Participates actively in the response to hyperosmotic and heat shock by preventing the aggregation of stress-denatured proteins and by disaggregating proteins, also in an autonomous, DnaK-independent fashion. Unfolded proteins bind initially to DnaJ; upon interaction with the DnaJ-bound protein, DnaK hydrolyzes its bound ATP, resulting in the formation of a stable complex. GrpE releases ADP from DnaK; ATP binding to DnaK triggers the release of the substrate protein, thus completing the reaction cycle. Several rounds of ATP-dependent interactions between DnaJ, DnaK and GrpE are required for fully efficient folding. Also involved, together with DnaK and GrpE, in the DNA replication of plasmids through activation of initiation proteins. Inhibits the beta-lactamase and RNase activity of RNase J. The sequence is that of Chaperone protein DnaJ 2 from Mycobacterium tuberculosis (strain ATCC 25618 / H37Rv).